A 102-amino-acid chain; its full sequence is MDALKPWHLYLLLCRNGSYYAGITNDLERRFQAHLRGTGARYTRANPPVQMLASHPYPDRASASRAECALKRLPRARKLAWLQAQPRTVHESQPADASITRV.

A GIY-YIG domain is found at 5–80; sequence KPWHLYLLLC…KRLPRARKLA (76 aa).

Belongs to the UPF0213 family.

The chain is UPF0213 protein XAC3202 from Xanthomonas axonopodis pv. citri (strain 306).